The sequence spans 123 residues: Large ribosomal subunit protein uL18 (123 aa).

It belongs to the universal ribosomal protein uL18 family. As to quaternary structure, part of the 50S ribosomal subunit; part of the 5S rRNA/L5/L18/L25 subcomplex. Contacts the 5S and 23S rRNAs.

Functionally, this is one of the proteins that bind and probably mediate the attachment of the 5S RNA into the large ribosomal subunit, where it forms part of the central protuberance. In Chlamydia felis (strain Fe/C-56) (Chlamydophila felis), this protein is Large ribosomal subunit protein uL18.